The sequence spans 193 residues: CD70 antigen (193 aa).

Residues 1–17 are Cytoplasmic-facing; that stretch reads MPEEGSGCSVRRRPYGC. A helical; Signal-anchor for type II membrane protein transmembrane segment spans residues 18-38; the sequence is VLRAALVPLVAGLVICLVVCI. Residues 39-193 are Extracellular-facing; it reads QRFAQAQQQL…TFFGVQWVRP (155 aa). One can recognise a THD domain in the interval 56-191; that stretch reads DVAELQLNHT…DETFFGVQWV (136 aa). Asn63 is a glycosylation site (N-linked (GlcNAc...) asparagine). 2 disulfides stabilise this stretch: Cys115–Cys151 and Cys133–Cys168. Asn170 carries an N-linked (GlcNAc...) asparagine glycan.

This sequence belongs to the tumor necrosis factor family. Homotrimer. Post-translationally, N-glycosylated.

It localises to the cell membrane. Functionally, expressed at the plasma membrane of B cells, it is the ligand of the CD27 receptor which is specifically expressed at the surface of T cells. The CD70-CD27 signaling pathway mediates antigen-specific T cell activation and expansion which in turn provides immune surveillance of B cells. The sequence is that of CD70 antigen from Homo sapiens (Human).